The primary structure comprises 387 residues: Lipid-A-disaccharide synthase (387 aa).

The protein belongs to the LpxB family.

It carries out the reaction 2-N,3-O-bis[(3R)-3-hydroxytetradecanoyl]-alpha-D-glucosaminyl 1-phosphate + UDP-2-N,3-O-bis[(3R)-3-hydroxytetradecanoyl]-alpha-D-glucosamine = lipid A disaccharide (E. coli) + UDP + H(+). It catalyses the reaction a lipid X + a UDP-2-N,3-O-bis[(3R)-3-hydroxyacyl]-alpha-D-glucosamine = a lipid A disaccharide + UDP + H(+). It participates in glycolipid biosynthesis; lipid IV(A) biosynthesis; lipid IV(A) from (3R)-3-hydroxytetradecanoyl-[acyl-carrier-protein] and UDP-N-acetyl-alpha-D-glucosamine: step 5/6. In terms of biological role, condensation of UDP-2,3-diacylglucosamine and 2,3-diacylglucosamine-1-phosphate to form lipid A disaccharide, a precursor of lipid A, a phosphorylated glycolipid that anchors the lipopolysaccharide to the outer membrane of the cell. This Blochmanniella pennsylvanica (strain BPEN) protein is Lipid-A-disaccharide synthase.